The sequence spans 33 residues: Beta-amanitin proprotein (33 aa).

Residues 1–10 (MSDINATRLP) constitute a propeptide that is removed on maturation. Residues 11-18 (IWGIGCDP) constitute a cross-link (cyclopeptide (Ile-Pro)). Residues 12 to 16 (WGIGC) constitute a cross-link (2'-cysteinyl-6'-hydroxytryptophan sulfoxide (Trp-Cys)). A propeptide spanning residues 19-33 (CVGDDVAALTTRGEA) is cleaved from the precursor.

The protein belongs to the MSDIN fungal toxin family. Post-translationally, processed by the macrocyclase-peptidase enzyme POPB to yield a toxic cyclic decapeptide. POPB first removes 10 residues from the N-terminus. Conformational trapping of the remaining peptide forces the enzyme to release this intermediate rather than proceed to macrocyclization. The enzyme rebinds the remaining peptide in a different conformation and catalyzes macrocyclization of the N-terminal 8 residues.

Its function is as follows. Toxin belonging to the bicyclic octapeptides amatoxins that acts by binding non-competitively to RNA polymerase II and greatly slowing the elongation of transcripts from target promoters. This Amanita rimosa protein is Beta-amanitin proprotein.